We begin with the raw amino-acid sequence, 276 residues long: SKA complex subunit 1 homolog (276 aa).

Residues 48-78 (VDVSLTAMEAQLQAVRRRLQEEREAFPKAKK) adopt a coiled-coil conformation.

The protein belongs to the SKA1 family.

The sequence is that of SKA complex subunit 1 homolog from Oryza sativa subsp. indica (Rice).